We begin with the raw amino-acid sequence, 518 residues long: GMP synthase [glutamine-hydrolyzing] (518 aa).

Residues 8–201 (TVLIIDFGSQ…VLKISNLKGN (194 aa)) enclose the Glutamine amidotransferase type-1 domain. Cysteine 85 functions as the Nucleophile in the catalytic mechanism. Catalysis depends on residues histidine 175 and glutamate 177. Residues 202–393 (WSMASYREQT…LGLPEQFIGR (192 aa)) form the GMPS ATP-PPase domain. Residue 229–235 (SGGVDSS) participates in ATP binding.

Homodimer.

It catalyses the reaction XMP + L-glutamine + ATP + H2O = GMP + L-glutamate + AMP + diphosphate + 2 H(+). It functions in the pathway purine metabolism; GMP biosynthesis; GMP from XMP (L-Gln route): step 1/1. Functionally, catalyzes the synthesis of GMP from XMP. This chain is GMP synthase [glutamine-hydrolyzing], found in Bartonella henselae (strain ATCC 49882 / DSM 28221 / CCUG 30454 / Houston 1) (Rochalimaea henselae).